Reading from the N-terminus, the 314-residue chain is Ribonuclease Z (314 aa).

His-63, His-65, Asp-67, His-68, His-142, Asp-205, and His-263 together coordinate Zn(2+). The Proton acceptor role is filled by Asp-67.

The protein belongs to the RNase Z family. In terms of assembly, homodimer. It depends on Zn(2+) as a cofactor.

The catalysed reaction is Endonucleolytic cleavage of RNA, removing extra 3' nucleotides from tRNA precursor, generating 3' termini of tRNAs. A 3'-hydroxy group is left at the tRNA terminus and a 5'-phosphoryl group is left at the trailer molecule.. Zinc phosphodiesterase, which displays some tRNA 3'-processing endonuclease activity. Probably involved in tRNA maturation, by removing a 3'-trailer from precursor tRNA. The chain is Ribonuclease Z from Kineococcus radiotolerans (strain ATCC BAA-149 / DSM 14245 / SRS30216).